Reading from the N-terminus, the 303-residue chain is Ribonucleoside-diphosphate reductase small subunit (303 aa).

The Fe cation site is built by Asp-60, Glu-90, and His-93. Tyr-97 is a catalytic residue. The chain crosses the membrane as a helical span at residues 147–167; it reads LLMILIEGIFFASSFASISYL. Residues Glu-153, Glu-187, and His-190 each coordinate Fe cation.

Belongs to the ribonucleoside diphosphate reductase small chain family. Heterotetramer composed of a homodimer of the large subunit (R1) and a homodimer of the small subunit (R2). Larger multisubunit protein complex are also active, composed of (R1)n(R2)n. Requires Fe cation as cofactor.

It is found in the host membrane. It catalyses the reaction a 2'-deoxyribonucleoside 5'-diphosphate + [thioredoxin]-disulfide + H2O = a ribonucleoside 5'-diphosphate + [thioredoxin]-dithiol. Its function is as follows. Ribonucleoside-diphosphate reductase holoenzyme provides the precursors necessary for viral DNA synthesis. Allows virus growth in non-dividing cells, as well as reactivation from latency in infected hosts. Catalyzes the biosynthesis of deoxyribonucleotides from the corresponding ribonucleotides. This Suid herpesvirus 1 (strain Kaplan) (SuHV-1) protein is Ribonucleoside-diphosphate reductase small subunit.